We begin with the raw amino-acid sequence, 240 residues long: Ribonuclease HII (240 aa).

The RNase H type-2 domain maps to 7–215; the sequence is RYAIGIDEAG…LKRIAPGWYV (209 aa). Aspartate 13, glutamate 14, and aspartate 112 together coordinate a divalent metal cation.

The protein belongs to the RNase HII family. The cofactor is Mn(2+). Requires Mg(2+) as cofactor.

The protein localises to the cytoplasm. It catalyses the reaction Endonucleolytic cleavage to 5'-phosphomonoester.. Endonuclease that specifically degrades the RNA of RNA-DNA hybrids. The protein is Ribonuclease HII of Hyperthermus butylicus (strain DSM 5456 / JCM 9403 / PLM1-5).